The sequence spans 335 residues: Anthranilate phosphoribosyltransferase (335 aa).

Residues Gly-80, 83–84 (GD), Thr-88, 90–93 (NIST), 108–116 (KHGNRAVSS), and Ser-120 contribute to the 5-phospho-alpha-D-ribose 1-diphosphate site. Residue Gly-80 participates in anthranilate binding. Residue Ser-92 participates in Mg(2+) binding. Anthranilate is bound at residue Asn-111. Anthranilate is bound at residue Arg-166. 2 residues coordinate Mg(2+): Asp-225 and Glu-226.

The protein belongs to the anthranilate phosphoribosyltransferase family. In terms of assembly, homodimer. Requires Mg(2+) as cofactor.

It carries out the reaction N-(5-phospho-beta-D-ribosyl)anthranilate + diphosphate = 5-phospho-alpha-D-ribose 1-diphosphate + anthranilate. It participates in amino-acid biosynthesis; L-tryptophan biosynthesis; L-tryptophan from chorismate: step 2/5. In terms of biological role, catalyzes the transfer of the phosphoribosyl group of 5-phosphorylribose-1-pyrophosphate (PRPP) to anthranilate to yield N-(5'-phosphoribosyl)-anthranilate (PRA). This is Anthranilate phosphoribosyltransferase from Clostridium kluyveri (strain NBRC 12016).